The sequence spans 383 residues: Na(+)/H(+) antiporter NhaA (383 aa).

Helical transmembrane passes span 19–39 (AGGV…NSPL), 56–76 (VLHG…GLEI), 92–112 (ILPG…FLAL), 122–142 (GWAV…ALLG), 151–171 (IFLT…IALF), 174–194 (AKLS…LAAL), 212–232 (LWGA…ALAL), 255–275 (VGYG…FAGL), 292–312 (LLFG…WLGF), 326–346 (GVAV…ALAF), and 356–376 (VKVG…LVLL).

This sequence belongs to the NhaA Na(+)/H(+) (TC 2.A.33) antiporter family.

It localises to the cell inner membrane. The catalysed reaction is Na(+)(in) + 2 H(+)(out) = Na(+)(out) + 2 H(+)(in). Functionally, na(+)/H(+) antiporter that extrudes sodium in exchange for external protons. The polypeptide is Na(+)/H(+) antiporter NhaA (Paramagnetospirillum magneticum (strain ATCC 700264 / AMB-1) (Magnetospirillum magneticum)).